Here is a 450-residue protein sequence, read N- to C-terminus: Phosphoglucosamine mutase (450 aa).

Ser102 functions as the Phosphoserine intermediate in the catalytic mechanism. Residues Ser102, Asp244, Asp246, and Asp248 each contribute to the Mg(2+) site. Ser102 carries the phosphoserine modification.

It belongs to the phosphohexose mutase family. Mg(2+) serves as cofactor. In terms of processing, activated by phosphorylation.

The catalysed reaction is alpha-D-glucosamine 1-phosphate = D-glucosamine 6-phosphate. In terms of biological role, catalyzes the conversion of glucosamine-6-phosphate to glucosamine-1-phosphate. This is Phosphoglucosamine mutase from Bartonella bacilliformis (strain ATCC 35685 / KC583 / Herrer 020/F12,63).